Here is a 237-residue protein sequence, read N- to C-terminus: F-box only protein 50 (237 aa).

Positions 31–231 constitute an FBA domain; that stretch reads VFETKPFERN…VTDSSVIVKA (201 aa). Residues 40–82 form a disordered region; sequence NLLQNPSPYGVNHTVPPPEPHRSGIPPPSDRPPQLEPEGNFSG. Over residues 64–74 the composition is skewed to pro residues; sequence IPPPSDRPPQL.

Expressed in nonspecific cytotoxic cells (NCC).

It is found in the cytoplasm. May promote cell proliferation. This chain is F-box only protein 50 (nccrp1), found in Danio rerio (Zebrafish).